A 420-amino-acid polypeptide reads, in one-letter code: Gamma-glutamyl phosphate reductase (420 aa).

Belongs to the gamma-glutamyl phosphate reductase family.

Its subcellular location is the cytoplasm. It catalyses the reaction L-glutamate 5-semialdehyde + phosphate + NADP(+) = L-glutamyl 5-phosphate + NADPH + H(+). The protein operates within amino-acid biosynthesis; L-proline biosynthesis; L-glutamate 5-semialdehyde from L-glutamate: step 2/2. In terms of biological role, catalyzes the NADPH-dependent reduction of L-glutamate 5-phosphate into L-glutamate 5-semialdehyde and phosphate. The product spontaneously undergoes cyclization to form 1-pyrroline-5-carboxylate. This chain is Gamma-glutamyl phosphate reductase, found in Shewanella amazonensis (strain ATCC BAA-1098 / SB2B).